The following is a 152-amino-acid chain: Ribosome maturation factor RimP (152 aa).

The protein belongs to the RimP family.

It is found in the cytoplasm. In terms of biological role, required for maturation of 30S ribosomal subunits. This is Ribosome maturation factor RimP from Paraburkholderia phymatum (strain DSM 17167 / CIP 108236 / LMG 21445 / STM815) (Burkholderia phymatum).